We begin with the raw amino-acid sequence, 201 residues long: GTP cyclohydrolase 1 (201 aa).

The segment at 1–20 (MDATVKKMSPETSRPSREEA) is disordered. 3 residues coordinate Zn(2+): cysteine 91, histidine 94, and cysteine 162.

Belongs to the GTP cyclohydrolase I family. As to quaternary structure, homomer.

It catalyses the reaction GTP + H2O = 7,8-dihydroneopterin 3'-triphosphate + formate + H(+). The protein operates within cofactor biosynthesis; 7,8-dihydroneopterin triphosphate biosynthesis; 7,8-dihydroneopterin triphosphate from GTP: step 1/1. The sequence is that of GTP cyclohydrolase 1 from Allorhizobium ampelinum (strain ATCC BAA-846 / DSM 112012 / S4) (Agrobacterium vitis (strain S4)).